A 79-amino-acid polypeptide reads, in one-letter code: UPF0337 protein YhjA (79 aa).

Positions 1–30 are disordered; sequence MALNDKLDATKDKVSGKVKETTGKVTGDEK.

It belongs to the UPF0337 (CsbD) family.

This Lactococcus lactis subsp. lactis (strain IL1403) (Streptococcus lactis) protein is UPF0337 protein YhjA (yhjA).